A 303-amino-acid chain; its full sequence is MDNNEKEKSKSELLVVTGLSGAGKSLVIQCLEDMGYFCVDNLPPVLLPKFVELMEQGNPSLRKVAIAIDLRGKELFNSLVAVVDKVKSEIDVIIDVMFLEASTEKLISRYKETRRAHPLMEQGKRSLINAINDEREHLSQIRSIANFVIDTTKLSPKELKERIRRYYEDEEFETFTINVTSFGFKHGIQMDADLVFDVRFLPNPYYVVDLRPLTGLDKDVYNYVMKWKETEIFFEKLTDLLDFMIPGYKKEGKSQLVIAIGCTGGQHRSVALAERLGNYLNEVFEYNVYVHHRDAHIESGEKK.

Residue 18–25 (GLSGAGKS) participates in ATP binding. A GTP-binding site is contributed by 69 to 72 (DLRG).

Belongs to the RapZ-like family.

Its function is as follows. Displays ATPase and GTPase activities. The polypeptide is Nucleotide-binding protein SAB0719 (Staphylococcus aureus (strain bovine RF122 / ET3-1)).